The chain runs to 146 residues: ATP synthase epsilon chain (146 aa).

Belongs to the ATPase epsilon chain family. F-type ATPases have 2 components, CF(1) - the catalytic core - and CF(0) - the membrane proton channel. CF(1) has five subunits: alpha(3), beta(3), gamma(1), delta(1), epsilon(1). CF(0) has three main subunits: a, b and c.

The protein resides in the cell inner membrane. Produces ATP from ADP in the presence of a proton gradient across the membrane. In Rhodospirillum centenum (strain ATCC 51521 / SW), this protein is ATP synthase epsilon chain.